The sequence spans 255 residues: Small ribosomal subunit protein uS2 (255 aa).

It belongs to the universal ribosomal protein uS2 family.

The protein is Small ribosomal subunit protein uS2 of Streptococcus uberis (strain ATCC BAA-854 / 0140J).